The sequence spans 430 residues: Asparagine--tRNA ligase (430 aa).

It belongs to the class-II aminoacyl-tRNA synthetase family. In terms of assembly, homodimer.

It localises to the cytoplasm. It catalyses the reaction tRNA(Asn) + L-asparagine + ATP = L-asparaginyl-tRNA(Asn) + AMP + diphosphate + H(+). The chain is Asparagine--tRNA ligase from Staphylococcus aureus (strain USA300).